The following is a 437-amino-acid chain: Aminopeptidase W (437 aa).

Active-site residues include cysteine 70, histidine 361, and asparagine 382.

The protein belongs to the peptidase C1 family.

The protein resides in the cytoplasm. This Lactobacillus delbrueckii subsp. lactis protein is Aminopeptidase W (pepW).